The primary structure comprises 248 residues: Ribosomal RNA small subunit methyltransferase G (248 aa).

S-adenosyl-L-methionine-binding positions include G85, F90, 108–110, 137–138, and R156; these read DSS and AE.

Belongs to the methyltransferase superfamily. RNA methyltransferase RsmG family.

The protein localises to the cytoplasm. Specifically methylates the N7 position of a guanine in 16S rRNA. In Prochlorococcus marinus (strain NATL1A), this protein is Ribosomal RNA small subunit methyltransferase G.